Consider the following 700-residue polypeptide: UvrABC system protein C (700 aa).

The region spanning 11–90 (TTPGVYLYKD…IKKHRPRYNI (80 aa)) is the GIY-YIG domain. A UVR domain is found at 200 to 235 (TELIDMLRADMQAASDALEFEEAALLRDQLQAVERT).

Belongs to the UvrC family. In terms of assembly, interacts with UvrB in an incision complex.

It is found in the cytoplasm. Functionally, the UvrABC repair system catalyzes the recognition and processing of DNA lesions. UvrC both incises the 5' and 3' sides of the lesion. The N-terminal half is responsible for the 3' incision and the C-terminal half is responsible for the 5' incision. This is UvrABC system protein C from Oleidesulfovibrio alaskensis (strain ATCC BAA-1058 / DSM 17464 / G20) (Desulfovibrio alaskensis).